The chain runs to 345 residues: High mobility group protein 20A (345 aa).

2 disordered regions span residues 1-130 (MEST…PFPE) and 166-206 (QKYQ…EKES). 2 stretches are compositionally biased toward polar residues: residues 22–38 (NNQPPFCGTTVSGSSQA) and 57–67 (LHQSGEQQLGN). Over residues 80 to 94 (ARRGGWNKGRKRKRS) the composition is skewed to basic residues. Positions 101 to 169 (PKAPLTGYVR…RYTKELQKYQ (69 aa)) form a DNA-binding region, HMG box. The segment covering 112-125 (MNERREQLRTERPD) has biased composition (basic and acidic residues). Positions 167 to 178 (KYQNTDAYQTYS) are enriched in polar residues. Positions 179 to 189 (RKAKSRQKGRQ) are enriched in basic residues. Residues 227–285 (SKAREAELRQLRKSNMEFEERNAALQKHVESMRSAVQRLEAELSQEHERNSLLQQHLQS) adopt a coiled-coil conformation.

The protein resides in the nucleus. Its function is as follows. Plays a role in neuronal differentiation. In Xenopus laevis (African clawed frog), this protein is High mobility group protein 20A (hmg20a).